Here is a 113-residue protein sequence, read N- to C-terminus: UPF0482 protein KPN78578_15540 (113 aa).

Residues 1-28 (MNMTLNKRWCLTAILALSAVVYTSSSYA) form the signal peptide. Positions 38–60 (GDSAQSRQQASMEKEQWNDTRSL) are disordered. Positions 39–48 (DSAQSRQQAS) are enriched in polar residues. Basic and acidic residues predominate over residues 49 to 59 (MEKEQWNDTRS).

It belongs to the UPF0482 family.

This Klebsiella pneumoniae subsp. pneumoniae (strain ATCC 700721 / MGH 78578) protein is UPF0482 protein KPN78578_15540.